Consider the following 674-residue polypeptide: Collagen alpha-1(X) chain (674 aa).

The first 18 residues, 1 to 18 (MLPQTALLLLMSLNLVHG), serve as a signal peptide directing secretion. Residues 19-56 (VFYTERYQTPTGIKGPPSNTKTQFFIPYAIKGKGVSLR) are nonhelical region (NC2). The segment at 54 to 521 (SLRGEQGIPG…PPGPPGQVAL (468 aa)) is disordered. A triple-helical region region spans residues 57–519 (GEQGIPGPPG…PGPPGPPGQV (463 aa)). A compositionally biased stretch (low complexity) spans 106-116 (GKPGLPGLPGK). Residues 137 to 147 (PRGPPGPPGIP) show a composition bias toward pro residues. Residues cysteine 194 and cysteine 197 are joined by a disulfide bond. Over residues 207–217 (PQGPTGPPGPP) the composition is skewed to pro residues. 4 stretches are compositionally biased toward low complexity: residues 277–293 (IPGMKGQPGAPGTAGLP), 303–312 (LPGLKGQRGP), 393–403 (EPGLNGPKGNP), and 441–453 (PRGVPGIPGTRGP). 2 positions are modified to 4-hydroxyproline: proline 460 and proline 463. The segment covering 506–516 (LPGPPGPPGPP) has biased composition (pro residues). The tract at residues 520–674 (ALPEDFVKAG…SFSGFLVAPM (155 aa)) is nonhelical region (NC1). One can recognise a C1q domain in the interval 541 to 674 (TGMPVSAFTV…SFSGFLVAPM (134 aa)). Ca(2+) contacts are provided by aspartate 620, glutamate 621, leucine 627, and aspartate 628.

In terms of assembly, homotrimer. In terms of processing, hydroxylation on proline residues within the sequence motif, GXPG, is most likely to be 4-hydroxy as this fits the requirement for 4-hydroxylation in vertebrates.

It is found in the secreted. The protein localises to the extracellular space. The protein resides in the extracellular matrix. In terms of biological role, type X collagen is a product of hypertrophic chondrocytes and has been localized to presumptive mineralization zones of hyaline cartilage. This chain is Collagen alpha-1(X) chain (COL10A1), found in Bos taurus (Bovine).